Here is a 231-residue protein sequence, read N- to C-terminus: 2-hydroxy-3-keto-5-methylthiopentenyl-1-phosphate phosphatase (231 aa).

This sequence belongs to the HAD-like hydrolase superfamily. MtnX family.

The catalysed reaction is 2-hydroxy-5-methylsulfanyl-3-oxopent-1-enyl phosphate + H2O = 1,2-dihydroxy-5-(methylsulfanyl)pent-1-en-3-one + phosphate. It participates in amino-acid biosynthesis; L-methionine biosynthesis via salvage pathway; L-methionine from S-methyl-5-thio-alpha-D-ribose 1-phosphate: step 4/6. Dephosphorylates 2-hydroxy-3-keto-5-methylthiopentenyl-1-phosphate (HK-MTPenyl-1-P) yielding 1,2-dihydroxy-3-keto-5-methylthiopentene (DHK-MTPene). The sequence is that of 2-hydroxy-3-keto-5-methylthiopentenyl-1-phosphate phosphatase from Bacillus pumilus (strain SAFR-032).